The chain runs to 172 residues: Small ribosomal subunit protein uS5 (172 aa).

An S5 DRBM domain is found at 11–74 (LSEVLVDVNR…QAAKKRMMKV (64 aa)).

It belongs to the universal ribosomal protein uS5 family. In terms of assembly, part of the 30S ribosomal subunit. Contacts proteins S4 and S8.

Its function is as follows. With S4 and S12 plays an important role in translational accuracy. Functionally, located at the back of the 30S subunit body where it stabilizes the conformation of the head with respect to the body. This chain is Small ribosomal subunit protein uS5, found in Rickettsia canadensis (strain McKiel).